Here is a 285-residue protein sequence, read N- to C-terminus: Iodotyrosine deiodinase 1 (285 aa).

Residues 1–21 (MFLLTPVLVAVVCILVVWVFK) traverse the membrane as a helical segment. FMN-binding positions include 96–100 (RRSVR) and 124–125 (SG). The 3,5-diiodo-L-tyrosine site is built by alanine 126, glutamate 153, tyrosine 157, and lysine 178. Residues alanine 126, glutamate 153, tyrosine 157, and lysine 178 each contribute to the 3-iodo-L-tyrosine site. FMN is bound by residues 233–235 (TTT) and arginine 275.

Belongs to the nitroreductase family. In terms of assembly, homodimer. The cofactor is FMN.

It localises to the cell membrane. The protein localises to the cytoplasmic vesicle membrane. It catalyses the reaction 2 iodide + L-tyrosine + 2 NADP(+) = 3,5-diiodo-L-tyrosine + 2 NADPH + H(+). The catalysed reaction is iodide + L-tyrosine + NADP(+) = 3-iodo-L-tyrosine + NADPH. The enzyme catalyses 3-iodo-L-tyrosine + iodide + NADP(+) = 3,5-diiodo-L-tyrosine + NADPH + H(+). It carries out the reaction L-tyrosine + chloride + NADP(+) = 3-chloro-L-tyrosine + NADPH. It catalyses the reaction bromide + L-tyrosine + NADP(+) = 3-bromo-L-tyrosine + NADPH. In terms of biological role, catalyzes the dehalogenation of halotyrosines such as 3-bromo-L-tyrosine, 3-chloro-L-tyrosine, 3-iodo-L-tyrosine and 3,5-diiodo-L-tyrosine. During thyroid hormone biosynthesis, facilitates iodide salvage by catalysing the oxidative NADPH-dependent deiodination of the halogenated by-products of thyroid hormone production, monoiodotyrosine (L-MIT) and diiodotyrosine (L-DIT). The scavanged iodide can then reenter the hormone-producing pathways. Acts more efficiently on 3-iodo-L-tyrosine than 3,5-diiodo-L-tyrosine. This Mus musculus (Mouse) protein is Iodotyrosine deiodinase 1 (Iyd).